Reading from the N-terminus, the 213-residue chain is GTP cyclohydrolase 1 (213 aa).

3 residues coordinate Zn(2+): C104, H107, and C175.

Belongs to the GTP cyclohydrolase I family. Homomer.

It catalyses the reaction GTP + H2O = 7,8-dihydroneopterin 3'-triphosphate + formate + H(+). Its pathway is cofactor biosynthesis; 7,8-dihydroneopterin triphosphate biosynthesis; 7,8-dihydroneopterin triphosphate from GTP: step 1/1. In Brucella canis (strain ATCC 23365 / NCTC 10854 / RM-666), this protein is GTP cyclohydrolase 1.